Here is a 228-residue protein sequence, read N- to C-terminus: Large ribosomal subunit protein uL16 (228 aa).

Belongs to the universal ribosomal protein uL16 family. Component of the small ribosomal subunit. Mature ribosomes consist of a small (40S) and a large (60S) subunit. The 40S subunit contains about 33 different proteins and 1 molecule of RNA (18S). The 60S subunit contains about 49 different proteins and 3 molecules of RNA (25S, 5.8S and 5S).

This Pinus taeda (Loblolly pine) protein is Large ribosomal subunit protein uL16 (RPL10).